We begin with the raw amino-acid sequence, 295 residues long: Inorganic pyrophosphatase 1 (295 aa).

The active-site Nucleophile is aspartate 19. 2 residues coordinate Mg(2+): aspartate 19 and aspartate 21. Aspartate 21 functions as the Proton donor in the catalytic mechanism. 2 residues coordinate substrate: aspartate 30 and aspartate 105. Mg(2+) is bound at residue aspartate 190.

Belongs to the HAD-like hydrolase superfamily. Tetramer. Mg(2+) is required as a cofactor. Requires Fe(2+) as cofactor. The cofactor is Ni(2+). Co(2+) serves as cofactor. It depends on Mn(2+) as a cofactor.

The enzyme catalyses diphosphate + H2O = 2 phosphate + H(+). Its function is as follows. Catalyzes the specific cleavage of pyrophosphate. The polypeptide is Inorganic pyrophosphatase 1 (PS2) (Arabidopsis thaliana (Mouse-ear cress)).